The chain runs to 311 residues: S-adenosyl-L-methionine-dependent tRNA 4-demethylwyosine synthase (311 aa).

6 residues coordinate [4Fe-4S] cluster: Cys26, Cys39, Cys52, Cys62, Cys66, and Cys69. The Radical SAM core domain maps to 45-283; sequence YGIETHRCIQ…LKLAKMLDEN (239 aa).

The protein belongs to the TYW1 family. Monomer. It depends on [4Fe-4S] cluster as a cofactor.

It is found in the cytoplasm. It catalyses the reaction N(1)-methylguanosine(37) in tRNA(Phe) + pyruvate + S-adenosyl-L-methionine = 4-demethylwyosine(37) in tRNA(Phe) + 5'-deoxyadenosine + L-methionine + CO2 + H2O. Component of the wyosine derivatives biosynthesis pathway that catalyzes the condensation of N-methylguanine with 2 carbon atoms from pyruvate to form the tricyclic 4-demethylwyosine (imG-14) on guanosine-37 of tRNA(Phe). The protein is S-adenosyl-L-methionine-dependent tRNA 4-demethylwyosine synthase of Methanocaldococcus jannaschii (strain ATCC 43067 / DSM 2661 / JAL-1 / JCM 10045 / NBRC 100440) (Methanococcus jannaschii).